Reading from the N-terminus, the 270-residue chain is Outer membrane protein P.IIC (270 aa).

The N-terminal stretch at 1–25 (MQPAKNLLFSSLLFSSLLFSSAARA) is a signal peptide. Over 26–35 (ASEDGGRGPY) the chain is Extracellular. A beta stranded membrane pass occupies residues 36–44 (VQADLAYAA). The Periplasmic portion of the chain corresponds to 45 to 76 (ERITHDYPKPTGTGKNKISTVSDYFRNIRTHS). The beta stranded transmembrane segment at 77–85 (VHPRVSVGY) threads the bilayer. Residues 86 to 89 (DFGS) are Extracellular-facing. The chain crosses the membrane as a beta stranded span at residues 90–96 (WRIAADY). Residues 97-142 (ARYRKWNNNKYSVSIKELLRNDNSASGVRGHLNIQTQKTEHQENGT) are Periplasmic-facing. A beta stranded transmembrane segment spans residues 143-157 (FHAVSSLGLSTIYDF). Over 158–162 (DTGSR) the chain is Extracellular. A beta stranded membrane pass occupies residues 163–173 (FKPYIGMRVAY). The Periplasmic portion of the chain corresponds to 174 to 221 (GHVRHQVRSVEQETEIITTYPSNGGGKVSLSSKMPPKSAHHQSNSIRR). Positions 194–217 (PSNGGGKVSLSSKMPPKSAHHQSN) are disordered. A beta stranded membrane pass occupies residues 222 to 234 (VGLGVIAGVGFDI). Topologically, residues 235–237 (TPN) are extracellular. Residues 238–246 (LTLDTGYRY) traverse the membrane as a beta stranded segment. Residues 247-261 (HNWGRLENTRFKTHE) lie on the Periplasmic side of the membrane. The beta stranded transmembrane segment at 262-270 (ASLGMRYRF) threads the bilayer.

This sequence belongs to the opacity porin family. As to quaternary structure, homotrimer.

The protein resides in the cell outer membrane. Its function is as follows. This protein serves as a porin. The sequence is that of Outer membrane protein P.IIC (piiC) from Neisseria gonorrhoeae.